Here is a 485-residue protein sequence, read N- to C-terminus: Protein nucleotidyltransferase YdiU (485 aa).

8 residues coordinate ATP: Gly-90, Gly-92, Arg-93, Lys-113, Asp-125, Gly-126, Arg-176, and Arg-183. The active-site Proton acceptor is the Asp-252. Mg(2+)-binding residues include Asn-253 and Asp-262. Asp-262 is an ATP binding site.

The protein belongs to the SELO family. Requires Mg(2+) as cofactor. Mn(2+) is required as a cofactor.

It catalyses the reaction L-seryl-[protein] + ATP = 3-O-(5'-adenylyl)-L-seryl-[protein] + diphosphate. It carries out the reaction L-threonyl-[protein] + ATP = 3-O-(5'-adenylyl)-L-threonyl-[protein] + diphosphate. The enzyme catalyses L-tyrosyl-[protein] + ATP = O-(5'-adenylyl)-L-tyrosyl-[protein] + diphosphate. The catalysed reaction is L-histidyl-[protein] + UTP = N(tele)-(5'-uridylyl)-L-histidyl-[protein] + diphosphate. It catalyses the reaction L-seryl-[protein] + UTP = O-(5'-uridylyl)-L-seryl-[protein] + diphosphate. It carries out the reaction L-tyrosyl-[protein] + UTP = O-(5'-uridylyl)-L-tyrosyl-[protein] + diphosphate. Nucleotidyltransferase involved in the post-translational modification of proteins. It can catalyze the addition of adenosine monophosphate (AMP) or uridine monophosphate (UMP) to a protein, resulting in modifications known as AMPylation and UMPylation. This is Protein nucleotidyltransferase YdiU from Aliivibrio fischeri (strain ATCC 700601 / ES114) (Vibrio fischeri).